The primary structure comprises 138 residues: Transcription antitermination protein NusB (138 aa).

This sequence belongs to the NusB family.

Its function is as follows. Involved in transcription antitermination. Required for transcription of ribosomal RNA (rRNA) genes. Binds specifically to the boxA antiterminator sequence of the ribosomal RNA (rrn) operons. The protein is Transcription antitermination protein NusB of Geobacter sulfurreducens (strain ATCC 51573 / DSM 12127 / PCA).